The primary structure comprises 1886 residues: Highly reducing polyketide synthase (1886 aa).

Residues 11–434 form the Ketosynthase family 3 (KS3) domain; the sequence is TQDVAIVGLS…GANAHAVLDD (424 aa). Catalysis depends on for beta-ketoacyl synthase activity residues Cys182, His317, and His357. The interval 483 to 568 is malonyl-CoA:ACP transacylase (MAT) domain; that stretch reads FLFSGQDQQS…VNNDLANTKK (86 aa). The segment at 616–750 is N-terminal hotdog fold; sequence RSLIGAPQPS…GLLSIEYESS (135 aa). The region spanning 616–926 is the PKS/mFAS DH domain; sequence RSLIGAPQPS…CTAISEATNP (311 aa). The tract at residues 618–924 is dehydratase (DH) domain; sequence LIGAPQPSYG…LHCTAISEAT (307 aa). His648 serves as the catalytic Proton acceptor; for dehydratase activity. The C-terminal hotdog fold stretch occupies residues 778-926; the sequence is HTTQSPKALY…CTAISEATNP (149 aa). Asp838 functions as the Proton donor; for dehydratase activity in the catalytic mechanism. The enoylreductase (ER) domain stretch occupies residues 1169–1480; the sequence is GMLDEIYFEA…AGKHMGKVAL (312 aa). Residues 1503–1681 are catalytic ketoreductase (KRc) domain; that stretch reads ATYVLVGGFG…VSLDLGLMRD (179 aa). The Carrier domain maps to 1802–1879; sequence DVTDLVLEIL…DLVDKIVAKS (78 aa). At Ser1839 the chain carries O-(pantetheine 4'-phosphoryl)serine.

The protein operates within mycotoxin biosynthesis. Functionally, highly reducing polyketide synthase; part of the gene cluster that mediates the biosynthesis of the selective antifungal agent ascochitine, an o-quinone methide that plays a possible protective role against other microbial competitors in nature and is considered to be important for pathogenicity of legume-associated Didymella species. The pathway probably begins with the synthesis of a keto-aldehyde intermediate by the ascochitine non-reducing polyketide synthase pksAC from successive condensations of 4 malonyl-CoA units, presumably with a simple acetyl-CoA starter unit. Release of the keto-aldehyde intermediate is consistent with the presence of the C-terminal reductive release domain. The HR-PKS (orf7) probably makes a diketide starter unit which is passed to the non-reducing polyketide synthase pksAC for further extension, producing ascochital and ascochitine. The aldehyde dehydrogenase (orf1), the 2-oxoglutarate-dependent dioxygenase (orf3) and the dehydrogenase (orf9) are probably involved in subsequent oxidations of methyl groups to the carboxylic acid of the heterocyclic ring. The ascochitine gene cluster also includes a gene encoding a short peptide with a cupin domain (orf2) that is often found in secondary metabolite gene clusters and which function has still to be determined. In Didymella fabae (Leaf and pod spot disease fungus), this protein is Highly reducing polyketide synthase.